A 127-amino-acid polypeptide reads, in one-letter code: Large ribosomal subunit protein bL21 (127 aa).

Positions 102–127 (TDNAKPTKGPRPKKAKAEAPAADAAE) are disordered.

Belongs to the bacterial ribosomal protein bL21 family. As to quaternary structure, part of the 50S ribosomal subunit. Contacts protein L20.

In terms of biological role, this protein binds to 23S rRNA in the presence of protein L20. The polypeptide is Large ribosomal subunit protein bL21 (Bradyrhizobium sp. (strain BTAi1 / ATCC BAA-1182)).